Consider the following 58-residue polypeptide: MRCLPVFIILPLLIPSAPSVDAQPMTEDDVPLASFHEQTLQELWNKRPCCPLIPGCCR.

The N-terminal stretch at 1–22 is a signal peptide; sequence MRCLPVFIILPLLIPSAPSVDA. Positions 23–47 are excised as a propeptide; it reads QPMTEDDVPLASFHEQTLQELWNKR.

This sequence belongs to the conotoxin T superfamily. In terms of processing, contains 2 disulfide bonds that can be either 'C1-C3, C2-C4' or 'C1-C4, C2-C3', since these disulfide connectivities have been observed for conotoxins with cysteine framework V (for examples, see AC P0DQQ7 and AC P81755). Expressed by the venom duct.

The protein resides in the secreted. This Conus leopardus (Leopard cone) protein is Conotoxin Leo-T2.